The following is a 1247-amino-acid chain: MLASSSRIRAAWTRALLLPLLLAGPVGCLSRQELFPFGPGQGDLELEDGDDFVSPALELSGALRFYDRSDIDAVYVTTNGIIATSEPPAKESHPGLFPPTFGAVAPFLADLDTTDGLGKVYYREDLSPSITQRAAECVHRGFPEISFQPSSAVVVTWESVAPYQGPSRDPDQKGKRNTFQAVLASSDSSSYAIFLYPEDGLQFHTTFSKKENNQVPAVVAFSQGSVGFLWKSNGAYNIFANDRESVENLAKSSNSGQQGVWVFEIGSPATTNGVVPADVILGTEDGAEYDDEDEDYDLATTRLGLEDVGTTPFSYKALRRGGADTYSVPSVLSPRRAATERPLGPPTERTRSFQLAVETFHQQHPQVIDVDEVEETGVVFSYNTDSRQTCANNRHQCSVHAECRDYATGFCCSCVAGYTGNGRQCVAEGSPQRVNGKVKGRIFVGSSQVPIVFENTDLHSYVVMNHGRSYTAISTIPETVGYSLLPLAPVGGIIGWMFAVEQDGFKNGFSITGGEFTRQAEVTFVGHPGNLVIKQRFSGIDEHGHLTIDTELEGRVPQIPFGSSVHIEPYTELYHYSTSVITSSSTREYTVTEPERDGASPSRIYTYQWRQTITFQECVHDDSRPALPSTQQLSVDSVFVLYNQEEKILRYALSNSIGPVREGSPDALQNPCYIGTHGCDTNAACRPGPRTQFTCECSIGFRGDGRTCYDIDECSEQPSVCGSHTICNNHPGTFRCECVEGYQFSDEGTCVAVVDQRPINYCETGLHNCDIPQRAQCIYTGGSSYTCSCLPGFSGDGQACQDVDECQPSRCHPDAFCYNTPGSFTCQCKPGYQGDGFRCVPGEVEKTRCQHEREHILGAAGATDPQRPIPPGLFVPECDAHGHYAPTQCHGSTGYCWCVDRDGREVEGTRTRPGMTPPCLSTVAPPIHQGPAVPTAVIPLPPGTHLLFAQTGKIERLPLEGNTMRKTEAKAFLHVPAKVIIGLAFDCVDKMVYWTDITEPSIGRASLHGGEPTTIIRQDLGSPEGIAVDHLGRNIFWTDSNLDRIEVAKLDGTQRRVLFETDLVNPRGIVTDSVRGNLYWTDWNRDNPKIETSYMDGTNRRILVQDDLGLPNGLTFDAFSSQLCWVDAGTNRAECLNPSQPSRRKALEGLQYPFAVTSYGKNLYFTDWKMNSVVALDLAISKETDAFQPHKQTRLYGITTALSQCPQGHNYCSVNNGGCTHLCLATPGSRTCRCPDNTLGVDCIEQK.

An N-terminal signal peptide occupies residues 1–28 (MLASSSRIRAAWTRALLLPLLLAGPVGC). The region spanning 106-268 (PFLADLDTTD…GVWVFEIGSP (163 aa)) is the NIDO domain. Sulfotyrosine occurs at positions 289 and 296. The EGF-like 1 domain occupies 386 to 426 (SRQTCANNRHQCSVHAECRDYATGFCCSCVAGYTGNGRQCV). 19 disulfides stabilise this stretch: Cys-390-Cys-403, Cys-397-Cys-412, Cys-411-Cys-618, Cys-414-Cys-425, Cys-672-Cys-685, Cys-679-Cys-695, Cys-697-Cys-708, Cys-714-Cys-727, Cys-721-Cys-736, Cys-738-Cys-750, Cys-762-Cys-777, Cys-769-Cys-787, Cys-789-Cys-800, Cys-806-Cys-817, Cys-811-Cys-826, Cys-828-Cys-839, Cys-849-Cys-878, Cys-889-Cys-896, and Cys-898-Cys-919. In terms of domain architecture, Nidogen G2 beta-barrel spans 430–667 (SPQRVNGKVK…GPVREGSPDA (238 aa)). The region spanning 668–709 (LQNPCYIGTHGCDTNAACRPGPRTQFTCECSIGFRGDGRTCY) is the EGF-like 2 domain. A Cell attachment site motif is present at residues 702–704 (RGD). The EGF-like 3; calcium-binding domain maps to 710-751 (DIDECSEQPSVCGSHTICNNHPGTFRCECVEGYQFSDEGTCV). In terms of domain architecture, EGF-like 4 spans 758–801 (PINYCETGLHNCDIPQRAQCIYTGGSSYTCSCLPGFSGDGQACQ). The 39-residue stretch at 802–840 (DVDECQPSRCHPDAFCYNTPGSFTCQCKPGYQGDGFRCV) folds into the EGF-like 5; calcium-binding domain. One can recognise a Thyroglobulin type-1 domain in the interval 846 to 919 (KTRCQHEREH…RTRPGMTPPC (74 aa)). 2 O-linked (GalNAc...) threonine glycosylation sites follow: Thr-922 and Thr-935. LDL-receptor class B repeat units lie at residues 990–1032 (KMVY…DHLG), 1033–1075 (RNIF…DSVR), 1076–1120 (GNLY…DAFS), and 1121–1162 (SQLC…YGKN). One can recognise an EGF-like 6 domain in the interval 1208–1244 (GHNYCSVNNGGCTHLCLATPGSRTCRCPDNTLGVDCI). 3 disulfide bridges follow: Cys-1212-Cys-1223, Cys-1219-Cys-1232, and Cys-1234-Cys-1243.

In terms of assembly, interacts with FBLN1. Interacts with LGALS3BP. Interacts with PLXDC1. Interacts with SVEP1. N- and O-glycosylated.

Its subcellular location is the secreted. It is found in the extracellular space. The protein resides in the extracellular matrix. The protein localises to the basement membrane. In terms of biological role, sulfated glycoprotein widely distributed in basement membranes and tightly associated with laminin. Also binds to collagen IV and perlecan. It probably has a role in cell-extracellular matrix interactions. This Homo sapiens (Human) protein is Nidogen-1 (NID1).